The chain runs to 424 residues: Kynureninase (424 aa).

Pyridoxal 5'-phosphate-binding positions include leucine 105, serine 106, 133–136 (FPTD), aspartate 218, histidine 221, and tyrosine 243. At lysine 244 the chain carries N6-(pyridoxal phosphate)lysine. Pyridoxal 5'-phosphate is bound by residues tryptophan 274 and asparagine 302.

Belongs to the kynureninase family. In terms of assembly, homodimer. Pyridoxal 5'-phosphate serves as cofactor.

It carries out the reaction L-kynurenine + H2O = anthranilate + L-alanine + H(+). The enzyme catalyses 3-hydroxy-L-kynurenine + H2O = 3-hydroxyanthranilate + L-alanine + H(+). Its pathway is amino-acid degradation; L-kynurenine degradation; L-alanine and anthranilate from L-kynurenine: step 1/1. It participates in cofactor biosynthesis; NAD(+) biosynthesis; quinolinate from L-kynurenine: step 2/3. In terms of biological role, catalyzes the cleavage of L-kynurenine (L-Kyn) and L-3-hydroxykynurenine (L-3OHKyn) into anthranilic acid (AA) and 3-hydroxyanthranilic acid (3-OHAA), respectively. This is Kynureninase from Stenotrophomonas maltophilia (strain K279a).